Reading from the N-terminus, the 524-residue chain is Tissue-resident T-cell transcription regulator protein ZNF683 (524 aa).

Residues 130-142 (NKDKLGKQPERAG) show a composition bias toward basic and acidic residues. 2 disordered regions span residues 130-166 (NKDK…NRKS) and 265-303 (QALP…LSSQ). 2 C2H2-type zinc fingers span residues 322–344 (YECN…LRVH) and 350–372 (FQCA…HLVH). The segment at 398 to 420 (REREVCHKRFSSSSNLKTHLRLH) adopts a C2H2-type 3; degenerate zinc-finger fold. The segment at 426–448 (FQCSVCRSRFTQHIHLKLHHRLH) adopts a C2H2-type 4 zinc-finger fold.

It belongs to the krueppel C2H2-type zinc-finger protein family. Expressed in terminally differentiated effector CD8(+) T-cells, but not in naive and central memory cells. Expressed in terminally differentiated natural killer (NK) cells and natural killer (NKT) T-cells (at protein level). Expressed strongly in effector-type CD8(+) T-cells and weakly in naive and memory CD8(+) T-cells. Expressed in terminally differentiated natural killer (NK) cells. Isoform 2 is strongly expressed in effector CD8(+) T and natural killer (NK) cells. Isoform 1 is expressed in effector CD8(+) T and natural killer (NK) cells. As to expression, (Microbial infection) Expressed in cytomegalovirus (CMV)-infected effector CD8(+) T-cells (at protein level).

The protein resides in the nucleus. In terms of biological role, transcription factor that mediates a transcriptional program in various innate and adaptive immune tissue-resident lymphocyte T-cell types such as tissue-resident memory T (Trm), natural killer (trNK) and natural killer T (NKT) cells and negatively regulates gene expression of proteins that promote the egress of tissue-resident T-cell populations from non-lymphoid organs. Plays a role in the development, retention and long-term establishment of adaptive and innate tissue-resident lymphocyte T cell types in non-lymphoid organs, such as the skin and gut, but also in other nonbarrier tissues like liver and kidney, and therefore may provide immediate immunological protection against reactivating infections or viral reinfection. Also plays a role in the differentiation of both thymic and peripheral NKT cells. Negatively regulates the accumulation of interferon-gamma (IFN-gamma) in NKT cells at steady state or after antigenic stimulation. Positively regulates granzyme B production in NKT cells after innate stimulation. Associates with the transcriptional repressor PRDM1/BLIMP1 to chromatin at gene promoter regions. Lacks transcriptional repressor activity. Binds to DNA within promoter regions of the transcriptional repressor PRDM1/BLIMP1 target sites. Unable to regulate interferon-gamma (IFN-gamma) production in cytomegalovirus (CMV)-infected effector CD8(+) T-cells. Functionally, transcriptional repressor that binds to DNA within promoter regions of the transcriptional repressor PRDM1/BLIMP1 target sites. Regulates interferon-gamma (IFN-gamma) production in cytomegalovirus (CMV)-infected effector CD8(+) T cells. The polypeptide is Tissue-resident T-cell transcription regulator protein ZNF683 (Homo sapiens (Human)).